Consider the following 131-residue polypeptide: DNA-directed RNA polymerase subunit Rpo8 (131 aa).

Belongs to the archaeal Rpo8 RNA polymerase subunit family. As to quaternary structure, part of the 13-subunit RNA polymerase complex. Interacts with Rpo1N on the periphery of the clamp head.

Its subcellular location is the cytoplasm. The catalysed reaction is RNA(n) + a ribonucleoside 5'-triphosphate = RNA(n+1) + diphosphate. Functionally, DNA-dependent RNA polymerase (RNAP) catalyzes the transcription of DNA into RNA using the four ribonucleoside triphosphates as substrates. In Saccharolobus shibatae (strain ATCC 51178 / DSM 5389 / JCM 8931 / NBRC 15437 / B12) (Sulfolobus shibatae), this protein is DNA-directed RNA polymerase subunit Rpo8.